A 314-amino-acid polypeptide reads, in one-letter code: Probable 5-dehydro-4-deoxyglucarate dehydratase (314 aa).

The protein belongs to the DapA family.

It carries out the reaction 5-dehydro-4-deoxy-D-glucarate + H(+) = 2,5-dioxopentanoate + CO2 + H2O. It functions in the pathway carbohydrate acid metabolism; D-glucarate degradation; 2,5-dioxopentanoate from D-glucarate: step 2/2. The chain is Probable 5-dehydro-4-deoxyglucarate dehydratase from Bradyrhizobium sp. (strain ORS 278).